A 436-amino-acid polypeptide reads, in one-letter code: Adenylosuccinate synthetase (436 aa).

Residues 13 to 19 (GDEGKGK) and 41 to 43 (GHT) contribute to the GTP site. The active-site Proton acceptor is the D14. 2 residues coordinate Mg(2+): D14 and G41. Residues 14-17 (DEGK), 39-42 (NAGH), T130, R144, Q225, T240, and R304 contribute to the IMP site. The active-site Proton donor is the H42. Residue 300–306 (ATTGRSR) coordinates substrate. GTP contacts are provided by residues R306, 332 to 334 (KLD), and 415 to 417 (STG).

Belongs to the adenylosuccinate synthetase family. Homodimer. The cofactor is Mg(2+).

It is found in the cytoplasm. The enzyme catalyses IMP + L-aspartate + GTP = N(6)-(1,2-dicarboxyethyl)-AMP + GDP + phosphate + 2 H(+). It functions in the pathway purine metabolism; AMP biosynthesis via de novo pathway; AMP from IMP: step 1/2. Plays an important role in the de novo pathway of purine nucleotide biosynthesis. Catalyzes the first committed step in the biosynthesis of AMP from IMP. In Hamiltonella defensa subsp. Acyrthosiphon pisum (strain 5AT), this protein is Adenylosuccinate synthetase.